A 150-amino-acid polypeptide reads, in one-letter code: Photosystem I reaction center subunit XI (150 aa).

Topologically, residues 1-72 (MSDFIQSYNN…DKLGPLRNTD (72 aa)) are stromal. The chain crosses the membrane as a helical span at residues 73–93 (VALLSGFLSAVGLIIILTVCL). At 94 to 118 (SMYGNVSFDKDDAKDLLQTTEGWGQ) the chain is on the lumenal side. Residues 119 to 139 (FTAGFLVGAVGGSGFAYLLLA) form a helical membrane-spanning segment. Over 140–150 (NIPVLQNLGLS) the chain is Stromal.

It belongs to the PsaL family.

It is found in the plastid. The protein resides in the chloroplast thylakoid membrane. In Gracilaria tenuistipitata var. liui (Red alga), this protein is Photosystem I reaction center subunit XI.